We begin with the raw amino-acid sequence, 495 residues long: Cardiolipin synthase A (495 aa).

The next 2 membrane-spanning stretches (helical) occupy residues 9–29 and 46–66; these read IEVL…WLIT and MAWL…YLLL. PLD phosphodiesterase domains follow at residues 227–254 and 408–435; these read MDLR…IDPK and EGGL…DMRS. Active-site residues include histidine 232, lysine 234, aspartate 239, histidine 413, lysine 415, and aspartate 420.

This sequence belongs to the phospholipase D family. Cardiolipin synthase subfamily. ClsA sub-subfamily.

The protein resides in the cell membrane. It catalyses the reaction 2 a 1,2-diacyl-sn-glycero-3-phospho-(1'-sn-glycerol) = a cardiolipin + glycerol. Functionally, catalyzes the reversible phosphatidyl group transfer from one phosphatidylglycerol molecule to another to form cardiolipin (CL) (diphosphatidylglycerol) and glycerol. This is Cardiolipin synthase A from Wigglesworthia glossinidia brevipalpis.